We begin with the raw amino-acid sequence, 1176 residues long: DNA-directed RNA polymerase subunit beta (1176 aa).

The segment covering 13–30 (TDASLHQGRPQSSSNSSV) has biased composition (polar residues). Residues 13–35 (TDASLHQGRPQSSSNSSVPGAPN) are disordered.

It belongs to the RNA polymerase beta chain family. The RNAP catalytic core consists of 2 alpha, 1 beta, 1 beta' and 1 omega subunit. When a sigma factor is associated with the core the holoenzyme is formed, which can initiate transcription.

The catalysed reaction is RNA(n) + a ribonucleoside 5'-triphosphate = RNA(n+1) + diphosphate. DNA-dependent RNA polymerase catalyzes the transcription of DNA into RNA using the four ribonucleoside triphosphates as substrates. In Mycobacterium ulcerans (strain Agy99), this protein is DNA-directed RNA polymerase subunit beta.